A 209-amino-acid polypeptide reads, in one-letter code: MRLIIAVDGPAAAGKGTLARRLASAFGLPHLDTGLLYRAVGRLVLDAGGDPGSPADAAWAVSVLVPETVQRSDLRVPEVDRAASLVAADPAVRAALLDFQRDFAAREGAVLDGRDIGTVVCPDAPVKLFVTASAEARLQRRLLELRNRGVAVEEQALRAEMQARDERDAARDVAPLRPAEDAEVLDTTHLDADQAFQRAEQIVRRKWPR.

An ATP-binding site is contributed by 9–17; the sequence is GPAAAGKGT.

The protein belongs to the cytidylate kinase family. Type 1 subfamily.

It is found in the cytoplasm. The enzyme catalyses CMP + ATP = CDP + ADP. The catalysed reaction is dCMP + ATP = dCDP + ADP. The chain is Cytidylate kinase from Granulibacter bethesdensis (strain ATCC BAA-1260 / CGDNIH1).